The sequence spans 501 residues: Aldehyde dehydrogenase 1A1 (501 aa).

Position 2 is an N-acetylserine (S2). N6-acetyllysine occurs at positions 91 and 128. NAD(+)-binding positions include 167–170 (IPWN), 193–196 (KPAE), 226–227 (GP), and 246–247 (GS). K252 carries the N6-acetyllysine modification. E269 serves as the catalytic Proton acceptor. 269–271 (ELG) contacts NAD(+). C303 serves as the catalytic Nucleophile. Residues 336–501 (LTPGATQGPQ…VTVKISQKNS (166 aa)) are mediates interaction with PRMT3. T337 is modified (phosphothreonine). 349–353 (EQYDK) serves as a coordination point for NAD(+). N6-acetyllysine occurs at positions 353 and 367. NAD(+) is bound at residue 400–402 (EIF). Residue K410 is modified to N6-acetyllysine. S413 bears the Phosphoserine mark. K419 and K495 each carry N6-acetyllysine.

It belongs to the aldehyde dehydrogenase family. Homotetramer. Interacts with PRMT3; the interaction is direct, inhibits ALDH1A1 aldehyde dehydrogenase activity and is independent of the methyltransferase activity of PRMT3. Post-translationally, the N-terminus is blocked most probably by acetylation.

Its subcellular location is the cytoplasm. It is found in the cytosol. The protein localises to the cell projection. The protein resides in the axon. It carries out the reaction an aldehyde + NAD(+) + H2O = a carboxylate + NADH + 2 H(+). The catalysed reaction is all-trans-retinal + NAD(+) + H2O = all-trans-retinoate + NADH + 2 H(+). The enzyme catalyses 9-cis-retinal + NAD(+) + H2O = 9-cis-retinoate + NADH + 2 H(+). It catalyses the reaction 11-cis-retinal + NAD(+) + H2O = 11-cis-retinoate + NADH + 2 H(+). It carries out the reaction 13-cis-retinal + NAD(+) + H2O = 13-cis-retinoate + NADH + 2 H(+). The catalysed reaction is 3-deoxyglucosone + NAD(+) + H2O = 2-dehydro-3-deoxy-D-gluconate + NADH + 2 H(+). The enzyme catalyses (E)-4-hydroxynon-2-enal + NAD(+) + H2O = (E)-4-hydroxynon-2-enoate + NADH + 2 H(+). It catalyses the reaction malonaldehyde + NAD(+) + H2O = 3-oxopropanoate + NADH + 2 H(+). It carries out the reaction hexanal + NAD(+) + H2O = hexanoate + NADH + 2 H(+). The catalysed reaction is propanal + NAD(+) + H2O = propanoate + NADH + 2 H(+). The enzyme catalyses acetaldehyde + NAD(+) + H2O = acetate + NADH + 2 H(+). It catalyses the reaction benzaldehyde + NAD(+) + H2O = benzoate + NADH + 2 H(+). It carries out the reaction 4-aminobutanal + NAD(+) + H2O = 4-aminobutanoate + NADH + 2 H(+). It functions in the pathway cofactor metabolism; retinol metabolism. Its function is as follows. Cytosolic dehydrogenase that catalyzes the irreversible oxidation of a wide range of aldehydes to their corresponding carboxylic acid. Functions downstream of retinol dehydrogenases and catalyzes the oxidation of retinaldehyde into retinoic acid, the second step in the oxidation of retinol/vitamin A into retinoic acid. This pathway is crucial to control the levels of retinol and retinoic acid, two important molecules which excess can be teratogenic and cytotoxic. Also oxidizes aldehydes resulting from lipid peroxidation like (E)-4-hydroxynon-2-enal/HNE, malonaldehyde and hexanal that form protein adducts and are highly cytotoxic. By participating for instance to the clearance of (E)-4-hydroxynon-2-enal/HNE in the lens epithelium prevents the formation of HNE-protein adducts and lens opacification. Also functions downstream of fructosamine-3-kinase in the fructosamine degradation pathway by catalyzing the oxidation of 3-deoxyglucosone, the carbohydrate product of fructosamine 3-phosphate decomposition, which is itself a potent glycating agent that may react with lysine and arginine side-chains of proteins. Also has an aminobutyraldehyde dehydrogenase activity and is probably part of an alternative pathway for the biosynthesis of GABA/4-aminobutanoate in midbrain, thereby playing a role in GABAergic synaptic transmission. The chain is Aldehyde dehydrogenase 1A1 from Macaca fascicularis (Crab-eating macaque).